A 346-amino-acid chain; its full sequence is Phosphate acyltransferase (346 aa).

This sequence belongs to the PlsX family. Homodimer. Probably interacts with PlsY.

The protein localises to the cytoplasm. It carries out the reaction a fatty acyl-[ACP] + phosphate = an acyl phosphate + holo-[ACP]. The protein operates within lipid metabolism; phospholipid metabolism. Catalyzes the reversible formation of acyl-phosphate (acyl-PO(4)) from acyl-[acyl-carrier-protein] (acyl-ACP). This enzyme utilizes acyl-ACP as fatty acyl donor, but not acyl-CoA. The chain is Phosphate acyltransferase from Geotalea daltonii (strain DSM 22248 / JCM 15807 / FRC-32) (Geobacter daltonii).